The following is an 85-amino-acid chain: Probable oxaloacetate decarboxylase gamma chain (85 aa).

The helical transmembrane segment at 15 to 35 (ISGMGFVLLFLIVLIYAISFI) threads the bilayer.

Belongs to the OadG family. Heterotrimer of an alpha, a beta and a gamma subunit. Na(+) serves as cofactor.

Its subcellular location is the cell membrane. The catalysed reaction is oxaloacetate + 2 Na(+)(in) + H(+) = pyruvate + 2 Na(+)(out) + CO2. In terms of biological role, catalyzes the decarboxylation of oxaloacetate coupled to Na(+) translocation. The sequence is that of Probable oxaloacetate decarboxylase gamma chain from Actinobacillus pleuropneumoniae serotype 5b (strain L20).